Here is a 313-residue protein sequence, read N- to C-terminus: Aspartate carbamoyltransferase catalytic subunit (313 aa).

2 residues coordinate carbamoyl phosphate: arginine 58 and threonine 59. Residue lysine 86 participates in L-aspartate binding. Carbamoyl phosphate is bound by residues arginine 108, histidine 136, and glutamine 139. 2 residues coordinate L-aspartate: arginine 169 and arginine 224. Residues glycine 265 and proline 266 each contribute to the carbamoyl phosphate site.

It belongs to the aspartate/ornithine carbamoyltransferase superfamily. ATCase family. Heterododecamer (2C3:3R2) of six catalytic PyrB chains organized as two trimers (C3), and six regulatory PyrI chains organized as three dimers (R2).

It carries out the reaction carbamoyl phosphate + L-aspartate = N-carbamoyl-L-aspartate + phosphate + H(+). It functions in the pathway pyrimidine metabolism; UMP biosynthesis via de novo pathway; (S)-dihydroorotate from bicarbonate: step 2/3. Functionally, catalyzes the condensation of carbamoyl phosphate and aspartate to form carbamoyl aspartate and inorganic phosphate, the committed step in the de novo pyrimidine nucleotide biosynthesis pathway. In Natranaerobius thermophilus (strain ATCC BAA-1301 / DSM 18059 / JW/NM-WN-LF), this protein is Aspartate carbamoyltransferase catalytic subunit.